A 369-amino-acid polypeptide reads, in one-letter code: 2-aminoethylphosphonate--pyruvate transaminase (369 aa).

An N6-(pyridoxal phosphate)lysine modification is found at lysine 193.

Belongs to the class-V pyridoxal-phosphate-dependent aminotransferase family. PhnW subfamily. As to quaternary structure, homodimer. The cofactor is pyridoxal 5'-phosphate.

The catalysed reaction is (2-aminoethyl)phosphonate + pyruvate = phosphonoacetaldehyde + L-alanine. Functionally, involved in phosphonate degradation. This Burkholderia pseudomallei (strain K96243) protein is 2-aminoethylphosphonate--pyruvate transaminase.